We begin with the raw amino-acid sequence, 177 residues long: Thymidine kinase (177 aa).

Position 11 to 18 (glycine 11 to serine 18) interacts with ATP. The Proton acceptor role is filled by glutamate 83. Phenylalanine 113 is a binding site for substrate. 2 residues coordinate Zn(2+): cysteine 138 and cysteine 141. Isoleucine 157 to glycine 161 provides a ligand contact to substrate. The Zn(2+) site is built by cysteine 170 and cysteine 173.

The protein belongs to the thymidine kinase family. In terms of assembly, homotetramer. Two molecules of substrate bind to each enzyme tetramer.

It catalyses the reaction thymidine + ATP = dTMP + ADP + H(+). In terms of biological role, phosphorylates thymidine and thymidine analogs, such as azidothymidine (AZT). Part of the salvage pathway for pyrimidine deoxyribonucleotide synthesis. This chain is Thymidine kinase (OPG101), found in Procyon lotor (Raccoon).